Here is a 30-residue protein sequence, read N- to C-terminus: Cliotide T6 (30 aa).

Positions 1–30 (SIPCGESCVYIPCITTIVGCSCKDKVCYKN) form a cross-link, cyclopeptide (Ser-Asn). 3 disulfides stabilise this stretch: cysteine 4–cysteine 20, cysteine 8–cysteine 22, and cysteine 13–cysteine 27.

Post-translationally, contains 3 disulfide bonds. In terms of processing, this is a cyclic peptide. As to expression, expressed in pod but not in flower, stem, shoot, leaf, seed, root and nodule (at protein level).

Functionally, probably participates in a plant defense mechanism. The chain is Cliotide T6 from Clitoria ternatea (Butterfly pea).